The primary structure comprises 670 residues: uncharacterized protein (670 aa).

The next 10 helical transmembrane spans lie at 23–42, 47–69, 76–98, 118–140, 153–170, 381–403, 410–432, 437–454, 461–483, and 493–510; these read YALRNTIAMCLALTVAYYLN, YWAMTSAAVVSFPTVGGVISKSL, LLGAIAALLLAGHTLNEPWFFLL, VAYAFQLAGYTAAIIAFPMVNIT, VCEVIVGILCGGMMMMIL, QWDAGANALTLAAISCVLYSAVA, SLLMRTLVLLSLFSFVVKFGLMV, LWQFLLFLFPLLATMQLL, FAALWGQLIVFMGSFIAVTNPPV, and NLAKIVGVALAWLAFAIL.

It belongs to the aromatic acid exporter ArAE (TC 2.A.85) family.

The protein localises to the cell membrane. This is an uncharacterized protein from Escherichia coli O157:H7.